Reading from the N-terminus, the 486-residue chain is UDP-N-acetylmuramate--L-alanine ligase (486 aa).

ATP is bound at residue 126 to 132 (GTHGKTS).

Belongs to the MurCDEF family.

The protein localises to the cytoplasm. It catalyses the reaction UDP-N-acetyl-alpha-D-muramate + L-alanine + ATP = UDP-N-acetyl-alpha-D-muramoyl-L-alanine + ADP + phosphate + H(+). It participates in cell wall biogenesis; peptidoglycan biosynthesis. Its function is as follows. Cell wall formation. The chain is UDP-N-acetylmuramate--L-alanine ligase from Corynebacterium glutamicum (strain R).